A 202-amino-acid chain; its full sequence is Small ribosomal subunit protein uS4c (202 aa).

The 64-residue stretch at Met-90–Ile-153 folds into the S4 RNA-binding domain.

The protein belongs to the universal ribosomal protein uS4 family. Part of the 30S ribosomal subunit. Contacts protein S5. The interaction surface between S4 and S5 is involved in control of translational fidelity.

It localises to the plastid. The protein localises to the chloroplast. Its function is as follows. One of the primary rRNA binding proteins, it binds directly to 16S rRNA where it nucleates assembly of the body of the 30S subunit. In terms of biological role, with S5 and S12 plays an important role in translational accuracy. This chain is Small ribosomal subunit protein uS4c (rps4), found in Cyathophorum bulbosum (Moss).